The primary structure comprises 76 residues: Exodeoxyribonuclease 7 small subunit (76 aa).

This sequence belongs to the XseB family. As to quaternary structure, heterooligomer composed of large and small subunits.

Its subcellular location is the cytoplasm. It carries out the reaction Exonucleolytic cleavage in either 5'- to 3'- or 3'- to 5'-direction to yield nucleoside 5'-phosphates.. Functionally, bidirectionally degrades single-stranded DNA into large acid-insoluble oligonucleotides, which are then degraded further into small acid-soluble oligonucleotides. This chain is Exodeoxyribonuclease 7 small subunit, found in Enterococcus faecalis (strain ATCC 700802 / V583).